The following is a 589-amino-acid chain: Aspartate--tRNA(Asp/Asn) ligase (589 aa).

Glu-172 lines the L-aspartate pocket. Positions 196–199 are aspartate; the sequence is QLFK. Arg-218 contacts L-aspartate. Residues 218–220 and Gln-227 contribute to the ATP site; that span reads RDE. His-449 contributes to the L-aspartate binding site. Glu-483 lines the ATP pocket. Arg-490 lines the L-aspartate pocket. 535–538 is a binding site for ATP; the sequence is GVDR.

Belongs to the class-II aminoacyl-tRNA synthetase family. Type 1 subfamily. In terms of assembly, homodimer.

The protein resides in the cytoplasm. The enzyme catalyses tRNA(Asx) + L-aspartate + ATP = L-aspartyl-tRNA(Asx) + AMP + diphosphate. Functionally, aspartyl-tRNA synthetase with relaxed tRNA specificity since it is able to aspartylate not only its cognate tRNA(Asp) but also tRNA(Asn). Reaction proceeds in two steps: L-aspartate is first activated by ATP to form Asp-AMP and then transferred to the acceptor end of tRNA(Asp/Asn). The chain is Aspartate--tRNA(Asp/Asn) ligase from Francisella philomiragia subsp. philomiragia (strain ATCC 25017 / CCUG 19701 / FSC 153 / O#319-036).